The sequence spans 205 residues: Beta-crystallin B2 (205 aa).

A2 bears the N-acetylalanine mark. The N-terminal arm stretch occupies residues 2–16; it reads ASDHQTQAGKPQPLN. Beta/gamma crystallin 'Greek key' domains follow at residues 17 to 56 and 57 to 101; these read PKII…LVQA and GPWV…RPIK. The segment at 102–106 is connecting peptide; it reads VDSQE. Beta/gamma crystallin 'Greek key' domains follow at residues 107–148 and 149–191; these read HKII…RVQS and GTWV…RRIR. The segment at 193–205 is C-terminal arm; it reads MQWHQRGAFHPTN.

It belongs to the beta/gamma-crystallin family. Homo/heterodimer, or complexes of higher-order. The structure of beta-crystallin oligomers seems to be stabilized through interactions between the N-terminal arms.

Functionally, crystallins are the dominant structural components of the vertebrate eye lens. This Oryctolagus cuniculus (Rabbit) protein is Beta-crystallin B2 (CRYBB2).